We begin with the raw amino-acid sequence, 309 residues long: Taste receptor type 2 member 31 (309 aa).

Over 1 to 2 the chain is Extracellular; it reads MI. Residues 3-23 traverse the membrane as a helical segment; sequence TFLPTIFSILVVVIFVIGNFG. Over 24–55 the chain is Cytoplasmic; it reads NGFIALVNSIEWVKRQKISFADQILTALAVSR. Residues 56-76 traverse the membrane as a helical segment; that stretch reads VGLLWALLLNWYSTVFNPAFY. Residues 77 to 100 are Extracellular-facing; the sequence is SVGVRTTVYDVWTVTGHFSNWLAT. The helical transmembrane segment at 101–121 threads the bilayer; it reads SLSIFYLLKIANFSNLIFLHL. The Cytoplasmic segment spans residues 122–126; that stretch reads KRRVK. The chain crosses the membrane as a helical span at residues 127–147; it reads SVILVMLLGPLLFLACQLFVI. Residues 148–181 lie on the Extracellular side of the membrane; that stretch reads NMKEILRTKEYEGNMTWKIKLRSAMYLSDATITT. N-linked (GlcNAc...) asparagine glycosylation occurs at asparagine 161. Residues 182-202 form a helical membrane-spanning segment; it reads LANLVPFTLTLLSFLLLICSL. The Cytoplasmic segment spans residues 203-229; it reads CKHLNKMQLHGKGSQDPSTKVHIKVLQ. The helical transmembrane segment at 230–250 threads the bilayer; sequence TVISFLLLCAIYFLSIMISVW. At 251 to 259 the chain is on the extracellular side; that stretch reads SFGSLENKP. The chain crosses the membrane as a helical span at residues 260–280; it reads VFMFCKAIRFSYPSIHPFILI. The Cytoplasmic segment spans residues 281–309; that stretch reads WGNKKLKQTFLSVLRQVRYWVKGEKPSSP.

This sequence belongs to the G-protein coupled receptor T2R family.

The protein localises to the membrane. Its function is as follows. Receptor that may play a role in the perception of bitterness and is gustducin-linked. May play a role in sensing the chemical composition of the gastrointestinal content. The activity of this receptor may stimulate alpha gustducin, mediate PLC-beta-2 activation and lead to the gating of TRPM5. The chain is Taste receptor type 2 member 31 (TAS2R31) from Pongo pygmaeus (Bornean orangutan).